Here is a 131-residue protein sequence, read N- to C-terminus: Large ribosomal subunit protein bL12 (131 aa).

Belongs to the bacterial ribosomal protein bL12 family. Homodimer. Part of the ribosomal stalk of the 50S ribosomal subunit. Forms a multimeric L10(L12)X complex, where L10 forms an elongated spine to which 2 to 4 L12 dimers bind in a sequential fashion. Binds GTP-bound translation factors.

In terms of biological role, forms part of the ribosomal stalk which helps the ribosome interact with GTP-bound translation factors. Is thus essential for accurate translation. In Prochlorococcus marinus subsp. pastoris (strain CCMP1986 / NIES-2087 / MED4), this protein is Large ribosomal subunit protein bL12.